The sequence spans 456 residues: Probable glycine dehydrogenase (decarboxylating) subunit 1 (456 aa).

Belongs to the GcvP family. N-terminal subunit subfamily. In terms of assembly, the glycine cleavage system is composed of four proteins: P, T, L and H. In this organism, the P 'protein' is a heterodimer of two subunits.

It carries out the reaction N(6)-[(R)-lipoyl]-L-lysyl-[glycine-cleavage complex H protein] + glycine + H(+) = N(6)-[(R)-S(8)-aminomethyldihydrolipoyl]-L-lysyl-[glycine-cleavage complex H protein] + CO2. Its function is as follows. The glycine cleavage system catalyzes the degradation of glycine. The P protein binds the alpha-amino group of glycine through its pyridoxal phosphate cofactor; CO(2) is released and the remaining methylamine moiety is then transferred to the lipoamide cofactor of the H protein. This chain is Probable glycine dehydrogenase (decarboxylating) subunit 1, found in Rhizorhabdus wittichii (strain DSM 6014 / CCUG 31198 / JCM 15750 / NBRC 105917 / EY 4224 / RW1) (Sphingomonas wittichii).